The sequence spans 443 residues: Omega-6 fatty acid desaturase, chloroplastic (443 aa).

The transit peptide at 1-64 (MASRIADSLF…AKKRIGCIKA (64 aa)) directs the protein to the chloroplast. Positions 166 to 170 (HDCAH) match the Histidine box-1 motif. Residues 202-206 (HDRHH) carry the Histidine box-2 motif. The Histidine box-3 motif lies at 362–366 (HIPHH).

This sequence belongs to the fatty acid desaturase type 1 family.

Its subcellular location is the plastid. It is found in the chloroplast membrane. The catalysed reaction is a (9Z)-octadecenoyl-containing glycerolipid + 2 reduced [2Fe-2S]-[ferredoxin] + O2 + 2 H(+) = a (9Z,12Z)-octadecadienoyl-containing glycerolipid + 2 oxidized [2Fe-2S]-[ferredoxin] + 2 H2O. The protein operates within lipid metabolism; polyunsaturated fatty acid biosynthesis. Chloroplast omega-6 fatty acid desaturase introduces the second double bond in the biosynthesis of 16:3 and 18:3 fatty acids, important constituents of plant membranes. It is thought to use ferredoxin as an electron donor and to act on fatty acids esterified to galactolipids, sulfolipids and phosphatidylglycerol. The chain is Omega-6 fatty acid desaturase, chloroplastic from Brassica napus (Rape).